We begin with the raw amino-acid sequence, 173 residues long: Small ribosomal subunit protein uS5 (173 aa).

Residues 17–80 enclose the S5 DRBM domain; the sequence is WQERVIQIRR…ADGKKQLIEV (64 aa).

Belongs to the universal ribosomal protein uS5 family. Part of the 30S ribosomal subunit. Contacts proteins S4 and S8.

With S4 and S12 plays an important role in translational accuracy. Functionally, located at the back of the 30S subunit body where it stabilizes the conformation of the head with respect to the body. The polypeptide is Small ribosomal subunit protein uS5 (Microcystis aeruginosa (strain NIES-843 / IAM M-2473)).